A 939-amino-acid chain; its full sequence is Valine--tRNA ligase (939 aa).

The 'HIGH' region motif lies at 47–57 (PNVTGILHMGH). The short motif at 563–567 (KLSKS) is the 'KMSKS' region element. Lys-566 is a binding site for ATP. Residues 874 to 939 (EHLAKERVRL…QSILDKLASL (66 aa)) adopt a coiled-coil conformation.

This sequence belongs to the class-I aminoacyl-tRNA synthetase family. ValS type 1 subfamily. Monomer.

The protein resides in the cytoplasm. The catalysed reaction is tRNA(Val) + L-valine + ATP = L-valyl-tRNA(Val) + AMP + diphosphate. Catalyzes the attachment of valine to tRNA(Val). As ValRS can inadvertently accommodate and process structurally similar amino acids such as threonine, to avoid such errors, it has a 'posttransfer' editing activity that hydrolyzes mischarged Thr-tRNA(Val) in a tRNA-dependent manner. The chain is Valine--tRNA ligase from Chlamydia trachomatis serovar L2b (strain UCH-1/proctitis).